We begin with the raw amino-acid sequence, 182 residues long: NADH-ubiquinone oxidoreductase 20 kDa subunit (182 aa).

[4Fe-4S] cluster contacts are provided by cysteine 57, cysteine 58, cysteine 122, and cysteine 152.

It belongs to the complex I 20 kDa subunit family. The cofactor is [4Fe-4S] cluster.

Its subcellular location is the mitochondrion. It catalyses the reaction a ubiquinone + NADH + 5 H(+)(in) = a ubiquinol + NAD(+) + 4 H(+)(out). The polypeptide is NADH-ubiquinone oxidoreductase 20 kDa subunit (NAD10) (Reclinomonas americana).